Consider the following 270-residue polypeptide: Putative phosphoenolpyruvate synthase regulatory protein (270 aa).

Glycine 150 to threonine 157 lines the ADP pocket.

Belongs to the pyruvate, phosphate/water dikinase regulatory protein family. PSRP subfamily.

The enzyme catalyses [pyruvate, water dikinase] + ADP = [pyruvate, water dikinase]-phosphate + AMP + H(+). It catalyses the reaction [pyruvate, water dikinase]-phosphate + phosphate + H(+) = [pyruvate, water dikinase] + diphosphate. Functionally, bifunctional serine/threonine kinase and phosphorylase involved in the regulation of the phosphoenolpyruvate synthase (PEPS) by catalyzing its phosphorylation/dephosphorylation. In Shewanella piezotolerans (strain WP3 / JCM 13877), this protein is Putative phosphoenolpyruvate synthase regulatory protein.